Consider the following 380-residue polypeptide: Alanine racemase (380 aa).

K41 serves as the catalytic Proton acceptor; specific for D-alanine. N6-(pyridoxal phosphate)lysine is present on K41. R141 is a substrate binding site. Y271 acts as the Proton acceptor; specific for L-alanine in catalysis. Substrate is bound at residue M318.

Belongs to the alanine racemase family. It depends on pyridoxal 5'-phosphate as a cofactor.

The catalysed reaction is L-alanine = D-alanine. Its pathway is amino-acid biosynthesis; D-alanine biosynthesis; D-alanine from L-alanine: step 1/1. Catalyzes the interconversion of L-alanine and D-alanine. May also act on other amino acids. This Latilactobacillus sakei subsp. sakei (strain 23K) (Lactobacillus sakei subsp. sakei) protein is Alanine racemase (alr).